The following is a 214-amino-acid chain: MADS-box protein CMB2 (214 aa).

One can recognise an MADS-box domain in the interval 3–58 (RGKLEIRKIENKTNRQVTFSKRRNGIMKKAQELTVLCDAKVSLLMISSTHKLHHYL). The region spanning 84–174 (WERMQEQHRK…VMELEAKFRG (91 aa)) is the K-box domain.

As to expression, in flowers. Not found in vegetative tissues.

It localises to the nucleus. In Dianthus caryophyllus (Carnation), this protein is MADS-box protein CMB2 (CMB2).